Here is a 944-residue protein sequence, read N- to C-terminus: Translation initiation factor IF-2 (944 aa).

2 disordered regions span residues 50-91 (SAKT…FAGK) and 114-349 (KVEV…VPAT). Basic and acidic residues-rich tracts occupy residues 75–86 (ESAKKNKEDHPR), 124–157 (VVTEKPKASEPVKKAEPKVEAKSEPKVEKVETKD), 164–185 (AEVKPENVADKKEPVVTEEKKK), and 199–233 (KRAEDIKKEQAAARPEKKKFDKNRNDRNNRSDNRR). Polar residues predominate over residues 267–280 (SSGSAPATDSFTPA). Residues 286 to 307 (SRRDRDRKKSDNNRDNTKDGNR) are compositionally biased toward basic and acidic residues. Polar residues-rich tracts occupy residues 317–331 (NRNQVRNARNSNWNQ) and 338–348 (YQNNQSSSVPA). The region spanning 443-614 (ERPAVVTIMG…LLVAEVQELK (172 aa)) is the tr-type G domain. Positions 452-459 (GHVDHGKT) are G1. 452–459 (GHVDHGKT) provides a ligand contact to GTP. Positions 477 to 481 (GITQH) are G2. Positions 498 to 501 (DTPG) are G3. Residues 498–502 (DTPGH) and 552–555 (NKID) contribute to the GTP site. Residues 552 to 555 (NKID) form a G4 region. Positions 590–592 (SAK) are G5.

The protein belongs to the TRAFAC class translation factor GTPase superfamily. Classic translation factor GTPase family. IF-2 subfamily.

Its subcellular location is the cytoplasm. One of the essential components for the initiation of protein synthesis. Protects formylmethionyl-tRNA from spontaneous hydrolysis and promotes its binding to the 30S ribosomal subunits. Also involved in the hydrolysis of GTP during the formation of the 70S ribosomal complex. In Lactococcus lactis subsp. lactis (strain IL1403) (Streptococcus lactis), this protein is Translation initiation factor IF-2 (infB).